Here is a 1782-residue protein sequence, read N- to C-terminus: A-kinase anchor protein 12 (1782 aa).

Disordered regions lie at residues 1–53 (MGAG…DPAT), 71–169 (QDEL…QAND), 189–400 (KTEK…APLA), 421–886 (VSTV…ELSE), 938–1089 (EREV…LKKE), 1105–1134 (PFTQ…ESSE), 1157–1274 (AIPP…ADEK), and 1305–1355 (KGEG…HVNE). Gly2 carries the N-myristoyl glycine lipid modification. Phosphoserine occurs at positions 11, 19, 28, 75, and 96. A compositionally biased stretch (low complexity) spans 16–53 (PEGSSTPAEPEPSGGGPSAEAAPDTTADPAIAASDPAT). Over residues 108–125 (GQRDSEDVSKRDSDKEMA) the composition is skewed to basic and acidic residues. Residues 145 to 154 (IIEQIPSSES) are compositionally biased toward low complexity. Ser154 is modified (phosphoserine). A compositionally biased stretch (polar residues) spans 157–168 (EELTQPTESQAN). Ser219, Ser248, Ser258, Ser280, Ser283, Ser286, Ser347, and Ser371 each carry phosphoserine. Residues 226-249 (ASKESEPKQSTEKPEETLKREQSH) are compositionally biased toward basic and acidic residues. The involved in PKC-binding stretch occupies residues 266–557 (KEEGEEKQEK…TQVPADSPDS (292 aa)). Composition is skewed to basic and acidic residues over residues 315 to 347 (KPKE…EVAS) and 363 to 379 (ESAH…KVEL). Phosphotyrosine is present on Tyr374. A phosphoserine mark is found at Ser381 and Ser392. The segment covering 423–435 (TVEERTEEQKTEV) has biased composition (basic and acidic residues). Residues 446–456 (ELVEMDAEPQE) show a composition bias toward acidic residues. Over residues 458–468 (EPAKELVKLKE) the composition is skewed to basic and acidic residues. A phosphoserine mark is found at Ser483 and Ser505. The span at 528–537 (LSGKKQKGKR) shows a compositional bias: basic residues. A phosphoserine mark is found at Ser554, Ser557, Ser598, Ser612, Ser627, and Ser629. The short motif at 607 to 627 (VTPWASFKKMVTPKKRVRRPS) is the AKAP CaM-binding 1 element. The segment covering 625–639 (RPSESDKEDELDKVK) has biased composition (basic and acidic residues). Residues 640–652 (SATLSSTESTASE) are compositionally biased toward low complexity. Residue Thr642 is modified to Phosphothreonine. Phosphoserine occurs at positions 644, 645, 648, and 651. The span at 655–674 (EEMKGSVEEPKPEEPKRKVD) shows a compositional bias: basic and acidic residues. Phosphoserine occurs at positions 696, 697, and 698. Basic and acidic residues predominate over residues 708-724 (GGDHQKADEAGKDKETG). Residues 739-749 (QGSSSPEQAGS) are compositionally biased toward polar residues. A phosphoserine mark is found at Ser749, Ser761, and Ser787. Positions 756 to 776 (VSTWESFKRLVTPRKKSKSKL) match the AKAP CaM-binding 2 motif. Basic and acidic residues predominate over residues 792–803 (STPDTEPGKEES). An AKAP CaM-binding 3 motif is present at residues 801-821 (EESWVSIKKFIPGRRKKRPDG). Ser806 bears the Phosphoserine mark. The segment covering 986-997 (GAEEGTEASAAE) has biased composition (low complexity). Lys1051 is covalently cross-linked (Glycyl lysine isopeptide (Lys-Gly) (interchain with G-Cter in SUMO1)). Residues 1072-1089 (AEAERPEEQAEASGLKKE) show a composition bias toward basic and acidic residues. A compositionally biased stretch (polar residues) spans 1164–1174 (ETPTDSETDGS). Basic and acidic residues-rich tracts occupy residues 1187–1198 (QKDEIVEIHEEN) and 1231–1251 (EETK…KEVS). Residues 1253–1267 (ETVSILSKTEGTQEA) are compositionally biased toward polar residues. Phosphoserine occurs at positions 1328 and 1331. Over residues 1333–1355 (VEREMVVQVEREKTEAEPTHVNE) the composition is skewed to basic and acidic residues. Residues Ser1391 and Ser1395 each carry the phosphoserine modification. The RII-binding stretch occupies residues 1541-1554 (ELETKSSKLVQNII). A disordered region spans residues 1584–1782 (KADSQDAGQE…ESAKSELTES (199 aa)). A Phosphoserine modification is found at Ser1587. Polar residues predominate over residues 1603 to 1612 (ASAQDETPIT). Composition is skewed to basic and acidic residues over residues 1629–1639 (DISKDMSEASE) and 1675–1699 (VPED…KEDE). A Phosphoserine modification is found at Ser1727. Basic and acidic residues-rich tracts occupy residues 1734 to 1757 (KQKE…ESDK) and 1766 to 1782 (ELQK…LTES).

In terms of assembly, binds to dimeric RII-alpha regulatory subunit of PKC. In terms of tissue distribution, expressed in endothelial cells, cultured fibroblasts and osteosarcoma, but not in platelets, leukocytes, monocytic cell lines or peripherical blood cells.

The protein localises to the cytoplasm. It localises to the cell cortex. It is found in the cytoskeleton. Its subcellular location is the membrane. Functionally, anchoring protein that mediates the subcellular compartmentation of protein kinase A (PKA) and protein kinase C (PKC). The sequence is that of A-kinase anchor protein 12 (AKAP12) from Homo sapiens (Human).